The primary structure comprises 233 residues: Octanoyltransferase (233 aa).

The 181-residue stretch at 38-218 (AGGPDTLLLL…LVCDALDGVL (181 aa)) folds into the BPL/LPL catalytic domain. Basic and acidic residues predominate over residues 57–66 (RRTEPHERPL). Positions 57–77 (RRTEPHERPLDGTPVVDTDRG) are disordered. Substrate-binding positions include 76 to 83 (RGGKITWH), 148 to 150 (AIG), and 161 to 163 (GFA). The active-site Acyl-thioester intermediate is the Cys-179.

This sequence belongs to the LipB family.

The protein resides in the cytoplasm. The enzyme catalyses octanoyl-[ACP] + L-lysyl-[protein] = N(6)-octanoyl-L-lysyl-[protein] + holo-[ACP] + H(+). The protein operates within protein modification; protein lipoylation via endogenous pathway; protein N(6)-(lipoyl)lysine from octanoyl-[acyl-carrier-protein]: step 1/2. Its function is as follows. Catalyzes the transfer of endogenously produced octanoic acid from octanoyl-acyl-carrier-protein onto the lipoyl domains of lipoate-dependent enzymes. Lipoyl-ACP can also act as a substrate although octanoyl-ACP is likely to be the physiological substrate. The protein is Octanoyltransferase of Mycobacterium avium (strain 104).